A 129-amino-acid polypeptide reads, in one-letter code: Glycine cleavage system H protein (129 aa).

The 83-residue stretch at 24–106 (TYTVGITEHA…YAGGWIFKIK (83 aa)) folds into the Lipoyl-binding domain. Lys65 bears the N6-lipoyllysine mark.

The protein belongs to the GcvH family. The glycine cleavage system is composed of four proteins: P, T, L and H. It depends on (R)-lipoate as a cofactor.

In terms of biological role, the glycine cleavage system catalyzes the degradation of glycine. The H protein shuttles the methylamine group of glycine from the P protein to the T protein. The sequence is that of Glycine cleavage system H protein from Escherichia coli O45:K1 (strain S88 / ExPEC).